The sequence spans 62 residues: Large ribosomal subunit protein bL28 (62 aa).

The disordered stretch occupies residues 1–28 (MARVCAITGRKARSGNSRSHAMNATKRK).

Belongs to the bacterial ribosomal protein bL28 family.

The chain is Large ribosomal subunit protein bL28 from Bacillus cytotoxicus (strain DSM 22905 / CIP 110041 / 391-98 / NVH 391-98).